A 775-amino-acid chain; its full sequence is Phosphoribosylformylglycinamidine synthase subunit PurL (775 aa).

H81 is an active-site residue. Residues Y84 and K123 each coordinate ATP. E125 serves as a coordination point for Mg(2+). Residues 126–129 and R148 contribute to the substrate site; that span reads SHNH. H127 serves as the catalytic Proton acceptor. D149 is a Mg(2+) binding site. Q272 is a substrate binding site. A Mg(2+)-binding site is contributed by D300. 344 to 346 serves as a coordination point for substrate; it reads ESQ. D525 and G562 together coordinate ATP. Position 563 (N563) interacts with Mg(2+). S565 serves as a coordination point for substrate.

This sequence belongs to the FGAMS family. As to quaternary structure, monomer. Part of the FGAM synthase complex composed of 1 PurL, 1 PurQ and 2 PurS subunits.

The protein resides in the cytoplasm. The catalysed reaction is N(2)-formyl-N(1)-(5-phospho-beta-D-ribosyl)glycinamide + L-glutamine + ATP + H2O = 2-formamido-N(1)-(5-O-phospho-beta-D-ribosyl)acetamidine + L-glutamate + ADP + phosphate + H(+). It functions in the pathway purine metabolism; IMP biosynthesis via de novo pathway; 5-amino-1-(5-phospho-D-ribosyl)imidazole from N(2)-formyl-N(1)-(5-phospho-D-ribosyl)glycinamide: step 1/2. Part of the phosphoribosylformylglycinamidine synthase complex involved in the purines biosynthetic pathway. Catalyzes the ATP-dependent conversion of formylglycinamide ribonucleotide (FGAR) and glutamine to yield formylglycinamidine ribonucleotide (FGAM) and glutamate. The FGAM synthase complex is composed of three subunits. PurQ produces an ammonia molecule by converting glutamine to glutamate. PurL transfers the ammonia molecule to FGAR to form FGAM in an ATP-dependent manner. PurS interacts with PurQ and PurL and is thought to assist in the transfer of the ammonia molecule from PurQ to PurL. The protein is Phosphoribosylformylglycinamidine synthase subunit PurL of Agrobacterium fabrum (strain C58 / ATCC 33970) (Agrobacterium tumefaciens (strain C58)).